The primary structure comprises 293 residues: Phosphatidylserine decarboxylase proenzyme (293 aa).

Active-site charge relay system; for autoendoproteolytic cleavage activity residues include Asp88, His144, and Ser247. The active-site Schiff-base intermediate with substrate; via pyruvic acid; for decarboxylase activity is the Ser247. Ser247 bears the Pyruvic acid (Ser); by autocatalysis mark.

The protein belongs to the phosphatidylserine decarboxylase family. PSD-B subfamily. Prokaryotic type I sub-subfamily. Heterodimer of a large membrane-associated beta subunit and a small pyruvoyl-containing alpha subunit. Pyruvate serves as cofactor. Post-translationally, is synthesized initially as an inactive proenzyme. Formation of the active enzyme involves a self-maturation process in which the active site pyruvoyl group is generated from an internal serine residue via an autocatalytic post-translational modification. Two non-identical subunits are generated from the proenzyme in this reaction, and the pyruvate is formed at the N-terminus of the alpha chain, which is derived from the carboxyl end of the proenzyme. The autoendoproteolytic cleavage occurs by a canonical serine protease mechanism, in which the side chain hydroxyl group of the serine supplies its oxygen atom to form the C-terminus of the beta chain, while the remainder of the serine residue undergoes an oxidative deamination to produce ammonia and the pyruvoyl prosthetic group on the alpha chain. During this reaction, the Ser that is part of the protease active site of the proenzyme becomes the pyruvoyl prosthetic group, which constitutes an essential element of the active site of the mature decarboxylase.

Its subcellular location is the cell membrane. The catalysed reaction is a 1,2-diacyl-sn-glycero-3-phospho-L-serine + H(+) = a 1,2-diacyl-sn-glycero-3-phosphoethanolamine + CO2. It participates in phospholipid metabolism; phosphatidylethanolamine biosynthesis; phosphatidylethanolamine from CDP-diacylglycerol: step 2/2. Its function is as follows. Catalyzes the formation of phosphatidylethanolamine (PtdEtn) from phosphatidylserine (PtdSer). This Xylella fastidiosa (strain M12) protein is Phosphatidylserine decarboxylase proenzyme.